We begin with the raw amino-acid sequence, 488 residues long: Ribulose bisphosphate carboxylase large chain (488 aa).

Residues asparagine 127 and threonine 177 each contribute to the substrate site. Lysine 179 (proton acceptor) is an active-site residue. Position 181 (lysine 181) interacts with substrate. Mg(2+) contacts are provided by lysine 205, aspartate 207, and glutamate 208. At lysine 205 the chain carries N6-carboxylysine. The Proton acceptor role is filled by histidine 297. Residues arginine 298, histidine 330, and serine 382 each coordinate substrate.

The protein belongs to the RuBisCO large chain family. Type I subfamily. As to quaternary structure, heterohexadecamer of 8 large chains and 8 small chains. Mg(2+) serves as cofactor.

Its subcellular location is the plastid. The protein localises to the chloroplast. It carries out the reaction 2 (2R)-3-phosphoglycerate + 2 H(+) = D-ribulose 1,5-bisphosphate + CO2 + H2O. It catalyses the reaction D-ribulose 1,5-bisphosphate + O2 = 2-phosphoglycolate + (2R)-3-phosphoglycerate + 2 H(+). RuBisCO catalyzes two reactions: the carboxylation of D-ribulose 1,5-bisphosphate, the primary event in carbon dioxide fixation, as well as the oxidative fragmentation of the pentose substrate in the photorespiration process. Both reactions occur simultaneously and in competition at the same active site. This chain is Ribulose bisphosphate carboxylase large chain (rbcL), found in Pyropia dentata (Red alga).